Here is a 474-residue protein sequence, read N- to C-terminus: DNA-binding protein (474 aa).

The tract at residues 1-34 (MAGRQREHPTVTPYLQETSPERPPPLPPKKKLRK) is disordered. Tyr-142 is subject to Phosphotyrosine; by host. The Zn(2+) site is built by Cys-231 and His-233. Residues 244-278 (VEVDVGSENGQRALKEQPSKTKVVQNRWGRSVVQI) form a flexible loop region. Residues Cys-286, Cys-302, Cys-343, Cys-345, Cys-397, and Cys-413 each coordinate Zn(2+). The tract at residues 460–474 (VALPTGHGDAEVEPF) is C-terminal arm, DBP binding.

The protein belongs to the adenoviridae E2A DNA-binding protein family. Homomultimerizes on viral ssDNA bound to pTP. Forms a initiation complex with viral polymerase, pTP and hosts NFIA and POU2F1/OCT1. Interacts with host SRCAP.

It is found in the host nucleus. Functionally, plays a role in the elongation phase of viral strand displacement replication by unwinding the template in an ATP-independent fashion, employing its capacity to form multimers. Also enhances the rate of initiation. Released from template upon second strand synthesis. Assembles in complex with viral pTP, viral pol, host NFIA and host POU2F1/OCT1 on viral origin of replication. Covers the whole ssDNA genome during synthesis. The complementary strand synthesis induces its relese from DNA template. May inhibit cellular transcription mediated by the interaction between host SRCAP and CBP. This is DNA-binding protein from Homo sapiens (Human).